The sequence spans 506 residues: Glutamate--tRNA ligase (506 aa).

A 'HIGH' region motif is present at residues 24 to 34; sequence PSPTGTPHVGL. The disordered stretch occupies residues 124 to 147; sequence TPEEVEQRHRAKGEDPKRGYDNYD. The span at 128–147 shows a compositional bias: basic and acidic residues; it reads VEQRHRAKGEDPKRGYDNYD. Residues 268–272 carry the 'KMSKS' region motif; sequence KLSKR. An ATP-binding site is contributed by Lys-271.

It belongs to the class-I aminoacyl-tRNA synthetase family. Glutamate--tRNA ligase type 1 subfamily. As to quaternary structure, monomer.

It localises to the cytoplasm. The enzyme catalyses tRNA(Glu) + L-glutamate + ATP = L-glutamyl-tRNA(Glu) + AMP + diphosphate. Catalyzes the attachment of glutamate to tRNA(Glu) in a two-step reaction: glutamate is first activated by ATP to form Glu-AMP and then transferred to the acceptor end of tRNA(Glu). This chain is Glutamate--tRNA ligase, found in Kocuria rhizophila (strain ATCC 9341 / DSM 348 / NBRC 103217 / DC2201).